We begin with the raw amino-acid sequence, 249 residues long: DNA repair protein RecO (249 aa).

It belongs to the RecO family.

Involved in DNA repair and RecF pathway recombination. The chain is DNA repair protein RecO from Rhodopseudomonas palustris (strain HaA2).